The sequence spans 682 residues: MIDQYKHQQLQIGLVSPQQIKAWANKNLPNGEAVGEVTRPSTFHYKTDKPEKDGLFCERIFGPIKSGICGCGNSRASGAENEDERFCQKCGVEFVDSRIRRYQMGYIKLACPVTHVWYLKGLPSYIANLLDKPLKKLEGLVYGDFSFARPSTKKPTFLRLRGLFEEEIASCNHSISPFFSTPGFATFRNREIATGAGAIREQLADLDLRIIIENSLVEWKELEDEGYSGDEWEDRKRRIRKVFLIRRMQLAKHFIQTNVEPEWMVLCLLPVLPPELRPIVYRSGDKVVTSDINELYKRVIRRNNNLAYLLKRSELAPADLVMCQEKLVQEAVDTLLDSGSRGQPTRDGHNKVYKSLSDVIEGKEGRFRETLLGKRVDYSGRSVIVVGPSLSLHQCGLPLEIAIKLFQLFVIRDLITKRATSNVRIAKRKIWEKEPIVWEILQEVMRGHPVLLNRAPTLHRLGIQAFQPTLVEGRTISLHPLVCKGFNADFDGDQMAVHLPLSLEAQAEARLLMFSHMNLLSPAIGDPICVPTQDMLIGLYVLTIGKRRGICANRYNSFRNYPNLKVNYNNNNSKYRKDKEPHFSSSYDALGAYRQKLISLDSPLWLRWNLDQRVIGSREVPIEIQYESLGTYHEIYAHYLIMGNRKKEIRSIYIRTTLGHISFYREIEEAVQGFSQAYSYTT.

The Zn(2+) site is built by C69, C71, C87, and C90. Residues D489, D491, and D493 each contribute to the Mg(2+) site.

Belongs to the RNA polymerase beta' chain family. RpoC1 subfamily. In plastids the minimal PEP RNA polymerase catalytic core is composed of four subunits: alpha, beta, beta', and beta''. When a (nuclear-encoded) sigma factor is associated with the core the holoenzyme is formed, which can initiate transcription. Requires Mg(2+) as cofactor. Zn(2+) serves as cofactor.

It localises to the plastid. The protein localises to the chloroplast. It carries out the reaction RNA(n) + a ribonucleoside 5'-triphosphate = RNA(n+1) + diphosphate. Its function is as follows. DNA-dependent RNA polymerase catalyzes the transcription of DNA into RNA using the four ribonucleoside triphosphates as substrates. The chain is DNA-directed RNA polymerase subunit beta' from Hordeum vulgare (Barley).